Here is a 286-residue protein sequence, read N- to C-terminus: Homoserine kinase (286 aa).

78 to 88 (PLARGLGSSSS) contacts ATP.

It belongs to the GHMP kinase family. Homoserine kinase subfamily.

It localises to the cytoplasm. The enzyme catalyses L-homoserine + ATP = O-phospho-L-homoserine + ADP + H(+). The protein operates within amino-acid biosynthesis; L-threonine biosynthesis; L-threonine from L-aspartate: step 4/5. Functionally, catalyzes the ATP-dependent phosphorylation of L-homoserine to L-homoserine phosphate. This Streptococcus equi subsp. zooepidemicus (strain H70) protein is Homoserine kinase.